A 271-amino-acid polypeptide reads, in one-letter code: 4,5-DOPA dioxygenase extradiol (271 aa).

Residues H22, H57, H177, and H234 each contribute to the Zn(2+) site.

Belongs to the DODA-type extradiol aromatic ring-opening dioxygenase family. As to quaternary structure, monomer. Zn(2+) serves as cofactor.

The protein localises to the cytoplasm. The enzyme catalyses L-dopa + O2 = 4-(L-alanin-3-yl)-2-hydroxy-cis,cis-muconate 6-semialdehyde + H(+). In terms of biological role, in vitro, opens the cyclic ring of dihydroxy-phenylalanine (DOPA) between carbons 4 and 5, thus producing an unstable seco-DOPA that rearranges nonenzymatically to betalamic acid. The physiological substrate is unknown. The chain is 4,5-DOPA dioxygenase extradiol (ygiD) from Escherichia coli (strain K12).